The sequence spans 304 residues: tRNA pseudouridine synthase A (304 aa).

Asp-65 (nucleophile) is an active-site residue. Substrate is bound at residue Tyr-123. The interval 274 to 304 (HTGQEKPEARLGNGDLESREERPPHEMSPLH) is disordered. Positions 289-298 (LESREERPPH) are enriched in basic and acidic residues.

The protein belongs to the tRNA pseudouridine synthase TruA family. In terms of assembly, homodimer.

The enzyme catalyses uridine(38/39/40) in tRNA = pseudouridine(38/39/40) in tRNA. Formation of pseudouridine at positions 38, 39 and 40 in the anticodon stem and loop of transfer RNAs. The polypeptide is tRNA pseudouridine synthase A (Gloeobacter violaceus (strain ATCC 29082 / PCC 7421)).